The following is a 317-amino-acid chain: Melanocyte-stimulating hormone receptor (317 aa).

Residues 1–37 (MPVQGSQRRLLGSLNSTPTATPHLGLAANQTGARCLE) are Extracellular-facing. A glycan (N-linked (GlcNAc...) asparagine) is linked at Asn29. The helical transmembrane segment at 38 to 63 (VSIPDGLFLSLGLVSLVENVLVVTAI) threads the bilayer. At 64–72 (AKNRNLHSP) the chain is on the cytoplasmic side. A helical transmembrane segment spans residues 73-93 (MYCFICCLALSDLLVSGSNML). Over 94 to 118 (ETAVILLLEAGALAARAAVVQQLDN) the chain is Extracellular. The helical transmembrane segment at 119–140 (VIDVITCSSMLSSLCFLGAIAV) threads the bilayer. At 141–163 (DRYISIFYALRYHSIVTLPRARR) the chain is on the cytoplasmic side. The helical transmembrane segment at 164–183 (AVAAIWVASVLFSMLFIAYY) threads the bilayer. At 184 to 191 (DHAAVLLC) the chain is on the extracellular side. Residues 192–211 (LVVFFLAMLVLMAVLYVHML) form a helical membrane-spanning segment. Topologically, residues 212-240 (ARACQHAQGIARLHKRQRPAHQSFGLKGA) are cytoplasmic. Residues 241–266 (ATLTILLGIFFLCWGPFFLHLTLIVL) form a helical membrane-spanning segment. At 267–279 (CPQHPTCSCIFKN) the chain is on the extracellular side. Residues 280–300 (FNLFLTLIICNAIIDPLIYAF) form a helical membrane-spanning segment. Residues 301–317 (RSQELRRTLKEVLLCSW) are Cytoplasmic-facing. Cys315 is lipidated: S-palmitoyl cysteine.

The protein belongs to the G-protein coupled receptor 1 family. Interacts with MGRN1, but does not undergo MGRN1-mediated ubiquitination; this interaction competes with GNAS-binding and thus inhibits agonist-induced cAMP production. Interacts with OPN3; the interaction results in a decrease in MC1R-mediated cAMP signaling and ultimately a decrease in melanin production in melanocytes.

It is found in the cell membrane. Receptor for MSH (alpha, beta and gamma) and ACTH. The activity of this receptor is mediated by G proteins which activate adenylate cyclase. Mediates melanogenesis, the production of eumelanin (black/brown) and phaeomelanin (red/yellow), via regulation of cAMP signaling in melanocytes. The polypeptide is Melanocyte-stimulating hormone receptor (MC1R) (Erythrocebus patas (Red guenon)).